A 540-amino-acid polypeptide reads, in one-letter code: Protein GDAP2 homolog (540 aa).

Residues 56 to 235 enclose the Macro domain; it reads RSPFPLCKDV…TYEVLAPLYF (180 aa). The region spanning 371 to 528 is the CRAL-TRIO domain; sequence QVEDLTEVSG…YITEYDMATN (158 aa).

It belongs to the GDAP2 family.

The chain is Protein GDAP2 homolog from Drosophila melanogaster (Fruit fly).